The sequence spans 285 residues: Bifunctional protein FolD (285 aa).

NADP(+) is bound by residues 165-167 (GRS) and S190.

The protein belongs to the tetrahydrofolate dehydrogenase/cyclohydrolase family. Homodimer.

It catalyses the reaction (6R)-5,10-methylene-5,6,7,8-tetrahydrofolate + NADP(+) = (6R)-5,10-methenyltetrahydrofolate + NADPH. The enzyme catalyses (6R)-5,10-methenyltetrahydrofolate + H2O = (6R)-10-formyltetrahydrofolate + H(+). Its pathway is one-carbon metabolism; tetrahydrofolate interconversion. In terms of biological role, catalyzes the oxidation of 5,10-methylenetetrahydrofolate to 5,10-methenyltetrahydrofolate and then the hydrolysis of 5,10-methenyltetrahydrofolate to 10-formyltetrahydrofolate. The chain is Bifunctional protein FolD from Burkholderia cenocepacia (strain HI2424).